Reading from the N-terminus, the 179-residue chain is Probable phosphopantothenoylcysteine decarboxylase (179 aa).

Residue asparagine 124 participates in substrate binding. Cysteine 157 (proton donor) is an active-site residue.

It belongs to the HFCD (homooligomeric flavin containing Cys decarboxylase) superfamily. FMN serves as cofactor.

The enzyme catalyses N-[(R)-4-phosphopantothenoyl]-L-cysteine + H(+) = (R)-4'-phosphopantetheine + CO2. It participates in cofactor biosynthesis; coenzyme A biosynthesis; CoA from (R)-pantothenate: step 3/5. In terms of biological role, catalyzes the decarboxylation of 4'-phosphopantothenoylcysteine to 4'-phosphopantetheine. In Streptococcus mutans serotype c (strain ATCC 700610 / UA159), this protein is Probable phosphopantothenoylcysteine decarboxylase (coaC).